A 71-amino-acid chain; its full sequence is Small ribosomal subunit protein eS17 (71 aa).

The protein belongs to the eukaryotic ribosomal protein eS17 family.

The protein is Small ribosomal subunit protein eS17 of Pyrobaculum aerophilum (strain ATCC 51768 / DSM 7523 / JCM 9630 / CIP 104966 / NBRC 100827 / IM2).